The following is an 84-amino-acid chain: Beta-toxin Tf1a (84 aa).

A signal peptide spans 1–20 (MKGMILFISCLLLIGIVVEC). Positions 21-82 (KEGYLMDHEG…VWERATNRCG (62 aa)) constitute an LCN-type CS-alpha/beta domain. 4 disulfide bridges follow: Cys31–Cys81, Cys35–Cys57, Cys43–Cys62, and Cys47–Cys64. Cysteine amide is present on Cys81.

The protein belongs to the long (4 C-C) scorpion toxin superfamily. Sodium channel inhibitor family. Beta subfamily. As to expression, expressed by the venom gland.

The protein localises to the secreted. Its function is as follows. Beta toxins bind voltage-independently at site-4 of sodium channels (Nav) and shift the voltage of activation toward more negative potentials thereby affecting sodium channel activation and promoting spontaneous and repetitive firing. The toxin induces a leftward shift, on all channels tested (including Blattella germanica and Varroa destructor Nav1), displacing a change in voltage dependence activation to more hyperpolarized potentials. In addition, the toxin mostly inhibits peak current of hNav1.4/SCN4A (53% inhibition of peak current at 100 nM) and hNav1.5/SCN5A (71% inhibition). The sequence is that of Beta-toxin Tf1a from Tityus fasciolatus (Central Brazilian scorpion).